Reading from the N-terminus, the 339-residue chain is uncharacterized protein (339 aa).

The disordered stretch occupies residues 1–24; sequence IQPARRHTKNTNMAKHTTKGTGHS. Residues 10 to 21 are compositionally biased toward polar residues; the sequence is NTNMAKHTTKGT.

It localises to the mitochondrion. This is an uncharacterized protein from Zea mays (Maize).